Consider the following 288-residue polypeptide: ATP synthase gamma chain (288 aa).

Belongs to the ATPase gamma chain family. F-type ATPases have 2 components, CF(1) - the catalytic core - and CF(0) - the membrane proton channel. CF(1) has five subunits: alpha(3), beta(3), gamma(1), delta(1), epsilon(1). CF(0) has three main subunits: a, b and c.

The protein localises to the cell inner membrane. In terms of biological role, produces ATP from ADP in the presence of a proton gradient across the membrane. The gamma chain is believed to be important in regulating ATPase activity and the flow of protons through the CF(0) complex. The protein is ATP synthase gamma chain of Glaesserella parasuis serovar 5 (strain SH0165) (Haemophilus parasuis).